The chain runs to 670 residues: UvrABC system protein B (670 aa).

The 383-residue stretch at 51–433 (EGLKKREQFQ…SARIVEQIIR (383 aa)) folds into the Helicase ATP-binding domain. 64–71 (GVTGSGKT) serves as a coordination point for ATP. Positions 117–140 (YYDYYQPESYLPAKDQYIEKDAQI) match the Beta-hairpin motif. The region spanning 453 to 612 (DVMQEIRKIV…IVPKTIRKPI (160 aa)) is the Helicase C-terminal domain. In terms of domain architecture, UVR spans 631–666 (PNVIIELDAEMREAADRLDFERAIQLRELIKKLEKE).

It belongs to the UvrB family. In terms of assembly, forms a heterotetramer with UvrA during the search for lesions. Interacts with UvrC in an incision complex.

The protein resides in the cytoplasm. In terms of biological role, the UvrABC repair system catalyzes the recognition and processing of DNA lesions. A damage recognition complex composed of 2 UvrA and 2 UvrB subunits scans DNA for abnormalities. Upon binding of the UvrA(2)B(2) complex to a putative damaged site, the DNA wraps around one UvrB monomer. DNA wrap is dependent on ATP binding by UvrB and probably causes local melting of the DNA helix, facilitating insertion of UvrB beta-hairpin between the DNA strands. Then UvrB probes one DNA strand for the presence of a lesion. If a lesion is found the UvrA subunits dissociate and the UvrB-DNA preincision complex is formed. This complex is subsequently bound by UvrC and the second UvrB is released. If no lesion is found, the DNA wraps around the other UvrB subunit that will check the other stand for damage. This chain is UvrABC system protein B, found in Methanosarcina acetivorans (strain ATCC 35395 / DSM 2834 / JCM 12185 / C2A).